We begin with the raw amino-acid sequence, 400 residues long: PHD finger protein 24 (400 aa).

Residue Gly-2 is the site of N-myristoyl glycine attachment. Residues 28–38 (LRDRPSIRRTG) show a composition bias toward basic and acidic residues. The interval 28–99 (LRDRPSIRRT…PEEFDRTSRF (72 aa)) is disordered. Arg-36 carries the post-translational modification Omega-N-methylarginine. Ser-43 carries the phosphoserine modification. Position 47 is a phosphothreonine (Thr-47). Phosphoserine is present on Ser-51. A compositionally biased stretch (basic and acidic residues) spans 78–97 (AWERLRDGRGVEPEEFDRTS). The PHD-type zinc-finger motif lies at 129–190 (NDEMCDVCEV…TGWSCHYCDN (62 aa)).

This Homo sapiens (Human) protein is PHD finger protein 24.